The sequence spans 835 residues: MKVLALRHSVAQVYADTQTYLHDDSKDEYENAFLISNLTTHNILYLNYSLKTLKILNKSGIAAVEVQSLDELFALIRCNFTYDYENNIVYLHDYSYYTNNEIRTDQHWITKTDITEYLLPGWKLTYVGYNGKNTRGHYNFSFSCQNAATDDDIIVEYIYSNELDFQNFLLRKIKERMTTSLPIARLSNRVFRDKLFPSIMNIHKKVINVGPRNESMFTFLNFPTIKQFSNGAYIVKHTIKLKQEKWLGKRVSQFDIGQYKNMLNIVTTIYYYYNLYHSKPIIYMLGSAPSYWIHDIKQYSDFTFETWDPLDTPYSTIHHKELFFDKDVNKLRDNSVLYIDIRTDRKNIDWKEWRKIVEQQTVSNLNIAYKYLATGKAKVCCVKLTAMDLELPITAKLLHHPTTEVRSEFYAILDVWDIINIKRFIPKGVFYAFINNITTDNVFIQPPFKLKASPTDYIVALYALSNDFNSRQDVINLINKQKQSLITVRINNTFKDEPKVNFKNIYDWTFLPTDFELKDSVITSYDGCLGMFGLSISLSSKPTGNNHLFIINGTDKYYKLDQYANHMSISRRSHQIRFSESATSYSGYIFRDLSNNNFNLIGTNVENSVSGHVYNALIYYRYNYTFDLKRWIYLHSIGKVAVQGGRYYEHAPIELIYACRSAREFAILQDDLTVLRYANEIEEYINKVYSITYADDPNYFIGIKFNSIPYEYDVKVPHLTLGVLFISDNMIHDVVTVLKKMKTELFKTEISTSYTYMLSDNMYVANASGVLSTYFKLYNMFYRNHITFGQSRMFIPHITLSFSNKQTVRIESTRLKINSIYLRKIKGETVFDMSE.

Residues 171–245 (RKIKERMTTS…KHTIKLKQEK (75 aa)) form an N7-methyltransferase activity region. The interval 246–428 (WLGKRVSQFD…INIKRFIPKG (183 aa)) is 2'-O-methyltransferase activity. Positions 429 to 555 (VFYAFINNIT…NHLFIINGTD (127 aa)) are N7-methyltransferase activity. The interval 556 to 692 (KYYKLDQYAN…EYINKVYSIT (137 aa)) is GTase/RTPase activity. A 2'-5'-phosphodiesterase activity region spans residues 693–835 (YADDPNYFIG…KGETVFDMSE (143 aa)). Active-site for 2'-5'-phosphodiesterase activity residues include H718, T720, H797, and T799.

Belongs to the rotavirus VP3 family. Interacts with VP1. Interacts with VP2.

The protein resides in the virion. It catalyses the reaction a 5'-end diphospho-ribonucleoside in mRNA + GTP + H(+) = a 5'-end (5'-triphosphoguanosine)-ribonucleoside in mRNA + diphosphate. The enzyme catalyses a 5'-end (5'-triphosphoguanosine)-ribonucleoside in mRNA + S-adenosyl-L-methionine = a 5'-end (N(7)-methyl 5'-triphosphoguanosine)-ribonucleoside in mRNA + S-adenosyl-L-homocysteine. The catalysed reaction is 5'-triphosphoadenylyl-(2'-&gt;5')-adenylyl-(2'-&gt;5')-adenosine + 2 H2O = 2 AMP + ATP + 2 H(+). In terms of biological role, multifunctional enzyme involved in mRNA capping. Catalyzes the formation of the 5' cap structure on the viral plus-strand transcripts. Specifically binds to GTP and displays guanylyltransferase and methyltransferase activities. Has affinity for ssRNA but not for dsRNA. Capping activity is non-specific and caps RNAs that initiate with either a G or an A residue. Together with VP1 polymerase, forms a VP1-VP3 complex positioned near the channels situated at each of the five-fold vertices of the core. Following infection, the outermost layer of the virus is lost, leaving a double-layered particle (DLP) made up of the core and VP6 shell. VP1 then catalyzes the transcription of fully conservative plus-strand genomic RNAs that are capped by VP3 and extruded through the DLP's channels into the cytoplasm where they function as mRNAs for translation of viral proteins. DLPs probably have an RNA triphosphatase activity as well, whereas open cores do not. Functionally, counteracts the host innate immune response thanks to its phosphodiesterase that degrades the 5'-triphosphorylated, 2'-5' linked adenylate oligomers produced by the host cell IFN-inducible 2',5'-oligoadenylate synthetase (OAS). The host RNaseL is therefore not activated. The protein is Protein VP3 of Homo sapiens (Human).